Consider the following 507-residue polypeptide: ATP synthase subunit beta (507 aa).

Positions 1–22 (MSGLASKAKSRVKSSKGKNSTN) are disordered. 183 to 190 (GGAGVGKT) is an ATP binding site.

Belongs to the ATPase alpha/beta chains family. In terms of assembly, F-type ATPases have 2 components, CF(1) - the catalytic core - and CF(0) - the membrane proton channel. CF(1) has five subunits: alpha(3), beta(3), gamma(1), delta(1), epsilon(1). CF(0) has three main subunits: a(1), b(2) and c(9-12). The alpha and beta chains form an alternating ring which encloses part of the gamma chain. CF(1) is attached to CF(0) by a central stalk formed by the gamma and epsilon chains, while a peripheral stalk is formed by the delta and b chains.

It localises to the cell inner membrane. The catalysed reaction is ATP + H2O + 4 H(+)(in) = ADP + phosphate + 5 H(+)(out). Produces ATP from ADP in the presence of a proton gradient across the membrane. The catalytic sites are hosted primarily by the beta subunits. This is ATP synthase subunit beta from Ehrlichia chaffeensis (strain ATCC CRL-10679 / Arkansas).